The following is a 157-amino-acid chain: Small ribosomal subunit protein bS16 (157 aa).

Residues 125–141 (KRKAAKKAAEEAAAKEA) are compositionally biased toward basic and acidic residues. Residues 125–157 (KRKAAKKAAEEAAAKEAEAEEAAEDKAEEESAE) are disordered. Acidic residues predominate over residues 142 to 157 (EAEEAAEDKAEEESAE).

It belongs to the bacterial ribosomal protein bS16 family.

This Corynebacterium kroppenstedtii (strain DSM 44385 / JCM 11950 / CIP 105744 / CCUG 35717) protein is Small ribosomal subunit protein bS16.